A 481-amino-acid chain; its full sequence is Surface lipoprotein assembly modifier 2 (481 aa).

Residues 1 to 24 (MKNGVKQLFLLSLIGLSLTNVAWA) form the signal peptide. An N-terminal domain region spans residues 24–192 (AEVARPKNDT…QYLLTLNQRN (169 aa)). Residues 193 to 481 (QWIWQVGLNF…RIYLEIGKIF (289 aa)) form a C-terminal probable beta barrel region. 14 consecutive transmembrane segments (beta stranded) span residues 194 to 204 (WIWQVGLNFLN), 223 to 243 (AWEKESGQGVGYSLSVEKKWP), 248 to 257 (FFSKTMFNGN), 271 to 281 (TVRIGGGLGYQ), 285 to 295 (VEVSLFPFQEK), 315 to 325 (LGIRLENVDWL), 329 to 339 (WQISTALEYGE), 353 to 363 (YFVSSTLFYLP), 368 to 377 (FWFVGMDFHR), 390 to 399 (KTLRLGWGQD), 404 to 414 (ISSRLTFSYAN), 432 to 441 (YTTTITLWHR), 448 to 458 (LTPKLSWDYQK), and 471 to 481 (NRIYLEIGKIF).

This sequence belongs to the Slam family.

The protein localises to the cell outer membrane. In terms of biological role, required for correct export to the cell surface of some cell outer membrane lipoproteins. This is Surface lipoprotein assembly modifier 2 from Haemophilus influenzae (strain ATCC 51907 / DSM 11121 / KW20 / Rd).